The chain runs to 371 residues: MEPDRQAEIAALDSALTTVERVLDVEGLRSRIEKLEHEASDPKLWDDQTRAQRVTSELSHTQGELRRVEELRRRLEDLPVLYELAAEEEGAAAGEALAEADAEFKALRADIEATEVRTLLSGEYDEREALVTIRSGAGGVDAADWAEMLMRMYVRWAEQHKYPVEVFDTSYAEEAGIKSATFAVHAPFAYGTLSVEQGTHRLVRISPFDNQSRRQTSFAEVEVLPVVETTDHIDIPEGDVRVDVYRSSGPGGQSVNTTDSAVRLTHIPTGIVVTCQNEKSQLQNKVAAMRVLQAKLLERKRIEERAELDALKGDGGSSWGNQMRSYVLHPYQMVKDLRTEYEVGNPATVLDGDIDGFLEAGIRWRNRKDDD.

Q253 is modified (N5-methylglutamine).

This sequence belongs to the prokaryotic/mitochondrial release factor family. In terms of processing, methylated by PrmC. Methylation increases the termination efficiency of RF2.

The protein resides in the cytoplasm. Peptide chain release factor 2 directs the termination of translation in response to the peptide chain termination codons UGA and UAA. In Mycobacterium marinum (strain ATCC BAA-535 / M), this protein is Peptide chain release factor 2.